A 372-amino-acid polypeptide reads, in one-letter code: 2-aminoethylphosphonate--pyruvate transaminase 2 (372 aa).

An N6-(pyridoxal phosphate)lysine modification is found at Lys-192.

This sequence belongs to the class-V pyridoxal-phosphate-dependent aminotransferase family. PhnW subfamily. In terms of assembly, homodimer. The cofactor is pyridoxal 5'-phosphate.

It catalyses the reaction (2-aminoethyl)phosphonate + pyruvate = phosphonoacetaldehyde + L-alanine. Its function is as follows. Involved in phosphonate degradation. The protein is 2-aminoethylphosphonate--pyruvate transaminase 2 of Polaromonas sp. (strain JS666 / ATCC BAA-500).